The primary structure comprises 250 residues: Phosphate import ATP-binding protein PstB (250 aa).

The 242-residue stretch at 4–245 (LTARDLKLSF…PRHELTEKYV (242 aa)) folds into the ABC transporter domain. 36-43 (GPSGSGKS) lines the ATP pocket.

This sequence belongs to the ABC transporter superfamily. Phosphate importer (TC 3.A.1.7) family. In terms of assembly, the complex is composed of two ATP-binding proteins (PstB), two transmembrane proteins (PstC and PstA) and a solute-binding protein (PstS).

Its subcellular location is the cell membrane. It catalyses the reaction phosphate(out) + ATP + H2O = ADP + 2 phosphate(in) + H(+). Functionally, part of the ABC transporter complex PstSACB involved in phosphate import. Responsible for energy coupling to the transport system. The chain is Phosphate import ATP-binding protein PstB from Pyrobaculum aerophilum (strain ATCC 51768 / DSM 7523 / JCM 9630 / CIP 104966 / NBRC 100827 / IM2).